The chain runs to 1284 residues: Putative late blight resistance protein homolog R1B-16 (1284 aa).

Positions 533–555 form a coiled coil; sequence PRMNEEIVGFKDVIENLRNQLLN. The region spanning 534 to 821 is the NB-ARC domain; that stretch reads RMNEEIVGFK…SESFIKSSEG (288 aa). 567–574 is an ATP binding site; that stretch reads GMPGLGKT. 8 LRR repeats span residues 942–966, 985–1010, 1013–1036, 1085–1107, 1108–1135, 1159–1181, 1182–1206, and 1219–1243; these read FKFLKVLDLEHQVVIDSIPTELFYL, LWNLETLILKHVSRCTVLLPSTVWDM, LRHLHIPNFRPENEEALLENSAKL, PIRLEILKLYRSKAFNTIPFCIS, APNLKYLKLSRSYMDSQYLSETADHLKN, FPQLKILKLEYLALMKWIVADDA, FPNLEQLVLHECRHLMEIPSCFMDI, and ESVVKSAMNIQETQVEDYQNTNFKL. Positions 1217–1284 constitute an HMA domain; that stretch reads CNESVVKSAM…VEKQRKRGML (68 aa).

The protein belongs to the disease resistance NB-LRR family.

The protein localises to the cytoplasm. The protein resides in the membrane. In terms of biological role, confers resistance to late blight (Phytophthora infestans) races carrying the avirulence gene Avr1. Resistance proteins guard the plant against pathogens that contain an appropriate avirulence protein via an indirect interaction with this avirulence protein. That triggers a defense system including the hypersensitive response, which restricts the pathogen growth. In Solanum demissum (Wild potato), this protein is Putative late blight resistance protein homolog R1B-16 (R1B-16).